The primary structure comprises 726 residues: MKSPLPWLKRRLSGRADSEHAQNLIRIIITTLFISYLGWRYQHTHGDTLMATWLILVGELLVSLGLMVAILLRPQVSHTRRLIGMLLDYTCTGAIMAIQGEPASPLYAVCMWVTIGNGLRYGSNYLRAATAMGSLCFLGAILISPYWKANPYLSWGLLLGLIAVPLYFDSLLRAMTRAVREARHANQAKSRFLANMSHEFRTPLNGLSGMTEVLATTRLDAEQKECLNTIQASARSLLSLVEEVLDISAIEAGKIRIDRRDFSLREMIGSVNLILQPQARGRRLEYGTQVADDVPDLLKGDTAHLRQVLLNLVGNAVKFTEHGHVLLRVTRVSGSAEDAVRLRFDVEDTGIGVPMDMRPRLFEAFEQADVGLSRRYEGTGLGTTIAKGLVEAMGGSIGFKENQPSGSVFWFELPMAIGEPLKSSTVRVPTGALVDAPEELESSNIIAFSNPFLRHRARVRSMRMLVADDHEANRMVLQRLLEKAGHKVLCVNGAEQVLDAMAEEDYDAVIVDLHMPGMNGLDMLKQLRVMQASGMRYTPVVVLSADVTPEAIRACEQAGARAFLAKPVLAAKLLDTLADLAVSTRQLATPATTVQVATSFEGVLDSSVLDELAALGMGEEFERQFVRQCLDDAQNCVGDIERDGTCSDWEQLRESAHALRGVASNLGLAQVASSGGELMRMADWQLQAEWRLRLSTLREQLKAGKDALDARVQGVKDGECSPRSNE.

The Periplasmic portion of the chain corresponds to 1-22 (MKSPLPWLKRRLSGRADSEHAQ). The tract at residues 1-22 (MKSPLPWLKRRLSGRADSEHAQ) is sensor. Residues 23-40 (NLIRIIITTLFISYLGWR) form a helical membrane-spanning segment. The Cytoplasmic segment spans residues 41–51 (YQHTHGDTLMA). A helical transmembrane segment spans residues 52–72 (TWLILVGELLVSLGLMVAILL). At 73–94 (RPQVSHTRRLIGMLLDYTCTGA) the chain is on the periplasmic side. Residues 95 to 115 (IMAIQGEPASPLYAVCMWVTI) form a helical membrane-spanning segment. The Cytoplasmic portion of the chain corresponds to 116 to 127 (GNGLRYGSNYLR). A helical membrane pass occupies residues 128–148 (AATAMGSLCFLGAILISPYWK). Residues 149–151 (ANP) lie on the Periplasmic side of the membrane. A helical membrane pass occupies residues 152–172 (YLSWGLLLGLIAVPLYFDSLL). At 173–726 (RAMTRAVREA…DGECSPRSNE (554 aa)) the chain is on the cytoplasmic side. In terms of domain architecture, Histidine kinase spans 195–417 (NMSHEFRTPL…VFWFELPMAI (223 aa)). The residue at position 198 (histidine 198) is a Phosphohistidine; by autocatalysis. One can recognise a Response regulatory domain in the interval 463–581 (RMLVADDHEA…KLLDTLADLA (119 aa)). Aspartate 512 is modified (4-aspartylphosphate). One can recognise an HPt domain in the interval 618-711 (GEEFERQFVR…KAGKDALDAR (94 aa)). The residue at position 657 (histidine 657) is a Phosphohistidine.

At low DSF concentrations, interacts with RpfF. In terms of processing, autophosphorylated. Activation may require a sequential transfer of a phosphate group from a His in the primary transmitter domain, to an Asp in the receiver domain and to a His in the secondary transmitter domain.

The protein resides in the cell inner membrane. It carries out the reaction ATP + protein L-histidine = ADP + protein N-phospho-L-histidine.. With respect to regulation, binding of DSF to the sensor region causes allosteric change, which facilitates RpfC autophosphorylation. In terms of biological role, hybrid sensor kinase that regulates diverse biological functions through two distinct molecular mechanisms. At low cell density, the extracellular concentration of the diffusible signaling factor (DSF) is below a threshold, and unphosphorylated RpfC is involved in the negative regulation of DSF synthesis, via direct interaction with the DSF synthase RpfF. Interaction prevents synthesis of DSF, which remains at a basal level. This activity does not involve the phosphorelay mechanism and is not dependent on RpfG. Is also member of the two-component regulatory system RpfG/RpfC, which is involved in the perception and response to DSF, which is essential for cell-cell signaling. At high cell density, the level of extracellular DSF increases and binding of DSF to the sensor region of RpfC causes autophosphorylation of RpfC, which results in the release of RpfF and the activation of RpfG via a four-step phosphorelay. Activation of RpfG leads to the positive regulation of biofilm dispersal and the production of virulence factors. This is Sensory/regulatory protein RpfC (rpfC) from Xanthomonas campestris pv. campestris (strain 8004).